Here is a 179-residue protein sequence, read N- to C-terminus: tRNA (cytidine(56)-2'-O)-methyltransferase (179 aa).

Residues Leu82, 112-116, and 130-137 each bind S-adenosyl-L-methionine; these read GAEKV and VGNQPHSE.

Belongs to the aTrm56 family. In terms of assembly, homodimer.

Its subcellular location is the cytoplasm. It carries out the reaction cytidine(56) in tRNA + S-adenosyl-L-methionine = 2'-O-methylcytidine(56) in tRNA + S-adenosyl-L-homocysteine + H(+). Specifically catalyzes the AdoMet-dependent 2'-O-ribose methylation of cytidine at position 56 in tRNAs. This is tRNA (cytidine(56)-2'-O)-methyltransferase from Methanococcus maripaludis (strain C5 / ATCC BAA-1333).